Reading from the N-terminus, the 334-residue chain is Ribosomal lysine N-methyltransferase 5 (334 aa).

S-adenosyl-L-methionine contacts are provided by residues tryptophan 88, 155–157, aspartate 177, tryptophan 227, and methionine 254; that span reads GAG.

This sequence belongs to the class I-like SAM-binding methyltransferase superfamily. RKM5 family.

In terms of biological role, S-adenosyl-L-methionine-dependent protein-lysine N-methyltransferase that methylates 60S ribosomal protein L1. This chain is Ribosomal lysine N-methyltransferase 5 (RKM5), found in Lachancea thermotolerans (strain ATCC 56472 / CBS 6340 / NRRL Y-8284) (Yeast).